A 393-amino-acid chain; its full sequence is Formate-dependent phosphoribosylglycinamide formyltransferase (393 aa).

Residues E22–L23 and E82 contribute to the N(1)-(5-phospho-beta-D-ribosyl)glycinamide site. ATP is bound by residues R114, K155, S160–Q165, E195–V198, and E203. The 190-residue stretch at R119–L308 folds into the ATP-grasp domain. E267 and E279 together coordinate Mg(2+). N(1)-(5-phospho-beta-D-ribosyl)glycinamide is bound by residues D286, K356, and R363–R364.

The protein belongs to the PurK/PurT family. In terms of assembly, homodimer.

The catalysed reaction is N(1)-(5-phospho-beta-D-ribosyl)glycinamide + formate + ATP = N(2)-formyl-N(1)-(5-phospho-beta-D-ribosyl)glycinamide + ADP + phosphate + H(+). It functions in the pathway purine metabolism; IMP biosynthesis via de novo pathway; N(2)-formyl-N(1)-(5-phospho-D-ribosyl)glycinamide from N(1)-(5-phospho-D-ribosyl)glycinamide (formate route): step 1/1. Involved in the de novo purine biosynthesis. Catalyzes the transfer of formate to 5-phospho-ribosyl-glycinamide (GAR), producing 5-phospho-ribosyl-N-formylglycinamide (FGAR). Formate is provided by PurU via hydrolysis of 10-formyl-tetrahydrofolate. This chain is Formate-dependent phosphoribosylglycinamide formyltransferase, found in Histophilus somni (strain 129Pt) (Haemophilus somnus).